A 181-amino-acid polypeptide reads, in one-letter code: Protein Syd (181 aa).

The protein belongs to the Syd family.

It is found in the cell inner membrane. In terms of biological role, interacts with the SecY protein in vivo. May bind preferentially to an uncomplexed state of SecY, thus functioning either as a chelating agent for excess SecY in the cell or as a regulatory factor that negatively controls the translocase function. The protein is Protein Syd of Citrobacter koseri (strain ATCC BAA-895 / CDC 4225-83 / SGSC4696).